Reading from the N-terminus, the 671-residue chain is Annexin A6 (671 aa).

Annexin repeat units follow at residues 18–89, 90–161, 173–245, 249–320, 361–432, 433–504, 519–594, and 598–669; these read FNAS…SLMR, PPAY…VLLQ, DLVE…AVVK, STAE…KLCE, FNDD…GLML, TPAQ…SLAL, EDAK…AIVR, and NKPA…LCGG.

Belongs to the annexin family.

Its subcellular location is the cytoplasm. The protein localises to the melanosome. May associate with CD21. May regulate the release of Ca(2+) from intracellular stores. In Gallus gallus (Chicken), this protein is Annexin A6 (ANXA6).